A 1431-amino-acid chain; its full sequence is Caskin-1 (1431 aa).

ANK repeat units lie at residues 48-77, 81-110, 114-143, 147-176, 188-217, and 220-249; these read DGFS…AVDI, KGMR…AVNV, EGHI…NPCM, SGKT…CAAL, NGTS…DINR, and KSGT…NAQV. Phosphotyrosine is present on tyrosine 253. Residues 281–347 enclose the SH3 domain; sequence SAALQVRATK…PSSLGEAIVK (67 aa). Residues 348 to 372 are disordered; that stretch reads RAGSRTGSEPSPPQGGGSLGPSAPP. A Phosphoserine modification is found at serine 358. The CASK-binding stretch occupies residues 375 to 471; the sequence is IWVLRKPFAG…PKKLESASAS (97 aa). Arginine 398 is modified (omega-N-methylarginine). Polar residues predominate over residues 420–430; sequence SQKSVSESSPG. The tract at residues 420 to 471 is disordered; it reads SQKSVSESSPGDSPVKPPEGSSGAARSQPPAAHAGQVYGEQPPKKLESASAS. 2 positions are modified to phosphoserine: serine 423 and serine 432. SAM domains follow at residues 476–539 and 545–609; these read KSAE…LNIP and HKPA…LAEL. Phosphoserine is present on residues serine 637 and serine 650. Positions 669–679 are enriched in low complexity; it reads LSGPAEAGAAA. 2 disordered regions span residues 669-1000 and 1016-1041; these read LSGP…TGSA and GGGG…EPGR. A compositionally biased stretch (polar residues) spans 692 to 712; that stretch reads RTTSRESSLSGRARHISSSQE. Phosphoserine is present on residues serine 723 and serine 728. Threonine 741 carries the post-translational modification Phosphothreonine. Position 791 is a phosphoserine (serine 791). Over residues 848–860 the composition is skewed to pro residues; that stretch reads PPAPGPAPPPVPA. Serine 891, serine 893, and serine 989 each carry phosphoserine. Pro residues predominate over residues 1028-1037; sequence GHPTPRPASP. Threonine 1067 is subject to Phosphothreonine. Position 1069 is a phosphoserine (serine 1069). Disordered stretches follow at residues 1072–1372 and 1389–1410; these read VTGL…RQKL and KIRQ…STGS. A compositionally biased stretch (basic and acidic residues) spans 1148–1160; the sequence is DTVKRRPKAKEPD. The segment covering 1191 to 1215 has biased composition (pro residues); it reads PELPPPPPPAEPPPADLMQLPPLPL. Residues 1236–1247 are compositionally biased toward polar residues; the sequence is QPVSKIQGSPTP. Residue serine 1259 is modified to Phosphoserine. Phosphothreonine is present on threonine 1268. The segment covering 1268–1283 has biased composition (pro residues); that stretch reads TPPPVSPKPPPPPTAP. 3 stretches are compositionally biased toward low complexity: residues 1284–1299, 1309–1327, and 1345–1359; these read KPAK…SATP, PPAA…SASP, and PRAA…PVAS. Phosphoserine is present on serine 1363. Positions 1389–1407 are enriched in basic and acidic residues; that stretch reads KIRQEDGQGPRPSSIEEKS.

In terms of assembly, binds the CaM kinase domain of CASK. Forms a ternary complex with CASK and LIN7A, LIN7B or LIN7C. Competes with APBA1 that forms a similar complex with CASK and LIN7 proteins. The tripartite complex CASKIN1/CASK/LIN7(A/B/C) binds the cytoplasmic tail of NRXN1. Polymerizes, via the tandem SAM domains, to form long, 8 nM wide fibers, upon which other proteins can assemble.

Its subcellular location is the cytoplasm. Its function is as follows. May link the scaffolding protein CASK to downstream intracellular effectors. This Mus musculus (Mouse) protein is Caskin-1 (Caskin1).